We begin with the raw amino-acid sequence, 261 residues long: Polyamine aminopropyltransferase (261 aa).

Residues 1-219 enclose the PABS domain; sequence MHPFRRRVRP…AVMAFRQSPS (219 aa). S-methyl-5'-thioadenosine-binding positions include Asp-96 and 124–125; that span reads DG. Asp-142 functions as the Proton acceptor in the catalytic mechanism.

Belongs to the spermidine/spermine synthase family. In terms of assembly, homodimer or homotetramer.

It localises to the cytoplasm. The catalysed reaction is S-adenosyl 3-(methylsulfanyl)propylamine + putrescine = S-methyl-5'-thioadenosine + spermidine + H(+). It functions in the pathway amine and polyamine biosynthesis; spermidine biosynthesis; spermidine from putrescine: step 1/1. Catalyzes the irreversible transfer of a propylamine group from the amino donor S-adenosylmethioninamine (decarboxy-AdoMet) to putrescine (1,4-diaminobutane) to yield spermidine. This is Polyamine aminopropyltransferase from Chromobacterium violaceum (strain ATCC 12472 / DSM 30191 / JCM 1249 / CCUG 213 / NBRC 12614 / NCIMB 9131 / NCTC 9757 / MK).